The sequence spans 337 residues: Ribonucleoside-diphosphate reductase small chain (337 aa).

Fe cation is bound by residues D85, E116, and H119. Residue Y123 is part of the active site. Positions 178, 212, and 215 each coordinate Fe cation.

Belongs to the ribonucleoside diphosphate reductase small chain family. Heterodimer of a large and a small subunit. The cofactor is Fe cation.

The enzyme catalyses a 2'-deoxyribonucleoside 5'-diphosphate + [thioredoxin]-disulfide + H2O = a ribonucleoside 5'-diphosphate + [thioredoxin]-dithiol. In terms of biological role, provides the precursors necessary for DNA synthesis. Catalyzes the biosynthesis of deoxyribonucleotides from the corresponding ribonucleotides. The chain is Ribonucleoside-diphosphate reductase small chain (RNR2) from Trypanosoma brucei brucei.